The primary structure comprises 287 residues: Phosphatidylserine decarboxylase proenzyme (287 aa).

Residues D89, H146, and S252 each act as charge relay system; for autoendoproteolytic cleavage activity in the active site. The active-site Schiff-base intermediate with substrate; via pyruvic acid; for decarboxylase activity is the S252. S252 carries the pyruvic acid (Ser); by autocatalysis modification.

The protein belongs to the phosphatidylserine decarboxylase family. PSD-B subfamily. Prokaryotic type I sub-subfamily. In terms of assembly, heterodimer of a large membrane-associated beta subunit and a small pyruvoyl-containing alpha subunit. Pyruvate is required as a cofactor. In terms of processing, is synthesized initially as an inactive proenzyme. Formation of the active enzyme involves a self-maturation process in which the active site pyruvoyl group is generated from an internal serine residue via an autocatalytic post-translational modification. Two non-identical subunits are generated from the proenzyme in this reaction, and the pyruvate is formed at the N-terminus of the alpha chain, which is derived from the carboxyl end of the proenzyme. The autoendoproteolytic cleavage occurs by a canonical serine protease mechanism, in which the side chain hydroxyl group of the serine supplies its oxygen atom to form the C-terminus of the beta chain, while the remainder of the serine residue undergoes an oxidative deamination to produce ammonia and the pyruvoyl prosthetic group on the alpha chain. During this reaction, the Ser that is part of the protease active site of the proenzyme becomes the pyruvoyl prosthetic group, which constitutes an essential element of the active site of the mature decarboxylase.

The protein resides in the cell membrane. The catalysed reaction is a 1,2-diacyl-sn-glycero-3-phospho-L-serine + H(+) = a 1,2-diacyl-sn-glycero-3-phosphoethanolamine + CO2. Its pathway is phospholipid metabolism; phosphatidylethanolamine biosynthesis; phosphatidylethanolamine from CDP-diacylglycerol: step 2/2. In terms of biological role, catalyzes the formation of phosphatidylethanolamine (PtdEtn) from phosphatidylserine (PtdSer). The polypeptide is Phosphatidylserine decarboxylase proenzyme (Shewanella halifaxensis (strain HAW-EB4)).